Consider the following 338-residue polypeptide: Nicotinate-nucleotide--dimethylbenzimidazole phosphoribosyltransferase (338 aa).

Glutamate 306 serves as the catalytic Proton acceptor.

Belongs to the CobT family.

The catalysed reaction is 5,6-dimethylbenzimidazole + nicotinate beta-D-ribonucleotide = alpha-ribazole 5'-phosphate + nicotinate + H(+). Its pathway is nucleoside biosynthesis; alpha-ribazole biosynthesis; alpha-ribazole from 5,6-dimethylbenzimidazole: step 1/2. In terms of biological role, catalyzes the synthesis of alpha-ribazole-5'-phosphate from nicotinate mononucleotide (NAMN) and 5,6-dimethylbenzimidazole (DMB). In Cereibacter sphaeroides (strain KD131 / KCTC 12085) (Rhodobacter sphaeroides), this protein is Nicotinate-nucleotide--dimethylbenzimidazole phosphoribosyltransferase.